The sequence spans 387 residues: Polyadenylate-binding protein RBP45A (387 aa).

RRM domains follow at residues 60–140 (KSLW…WAQA), 154–233 (HTIF…PAAN), and 260–332 (TTIF…WGRS). Positions 329-342 (WGRSPNKQSDQAQW) are enriched in polar residues. The segment at 329–387 (WGRSPNKQSDQAQWNGGGYYGYPPQPQGGYGYAAQPPTQDPNAYYGGYTGYGNYQQQRQ) is disordered.

The protein belongs to the polyadenylate-binding RBP45 family. Interacts with the poly(A) tail of mRNA in nucleus. In terms of tissue distribution, mostly expressed in seedlings, and, to a lower extent, in leaves, stems, and flowers. Present in immature anther tissues (tapetum cells) and mature pollen grains.

The protein localises to the nucleus. In terms of biological role, heterogeneous nuclear ribonucleoprotein (hnRNP)-protein binding the poly(A) tail of mRNA and probably involved in some steps of pre-mRNA maturation. The protein is Polyadenylate-binding protein RBP45A (RBP45A) of Arabidopsis thaliana (Mouse-ear cress).